The chain runs to 352 residues: MGESERIPVGIIGASGYGGVQLVRLLLEHPQVEIAYLGGKGSAGKPYWDLYPHLSHLVNLTVEPIDLEVVASRCQVVFLGLPNGLACDMAPQLIAKGCKVLDLSADYRFRDLQTYTAWYNKDRSDTETAAKAVYGLPELYRTEIQSASLIGCPGCYPTASLMALSPLLKQGLILPETAIIDAKSGTSGGGRQEKIHLLLAEAEGSLGAYGVAKHRHTPEIEQVCSDLAGHEVKVQFTPHLIPMVRGILSTVYASLRDPGLVRDDILTIYSAFYRSSPFVKILPHGIYPQTKWAWGTNLCYIGIETDPRTDRVIVLSAIDNLMKGQAGQAVQCLNLMMGWEETLGLPQLSFYP.

Residue Cys155 is part of the active site.

It belongs to the NAGSA dehydrogenase family. Type 1 subfamily.

The protein localises to the cytoplasm. The catalysed reaction is N-acetyl-L-glutamate 5-semialdehyde + phosphate + NADP(+) = N-acetyl-L-glutamyl 5-phosphate + NADPH + H(+). Its pathway is amino-acid biosynthesis; L-arginine biosynthesis; N(2)-acetyl-L-ornithine from L-glutamate: step 3/4. In terms of biological role, catalyzes the NADPH-dependent reduction of N-acetyl-5-glutamyl phosphate to yield N-acetyl-L-glutamate 5-semialdehyde. The chain is N-acetyl-gamma-glutamyl-phosphate reductase from Rippkaea orientalis (strain PCC 8801 / RF-1) (Cyanothece sp. (strain PCC 8801)).